The primary structure comprises 269 residues: WW domain-binding protein 1 (269 aa).

Short sequence motifs (PPxY motif) lie at residues 124–127 (PPAY) and 137–141 (PPPPY). Disordered stretches follow at residues 169 to 203 (EGTN…PPSC) and 249 to 269 (PPES…GDIP). A compositionally biased stretch (polar residues) spans 174-183 (EGVSSHQSAP).

Interacts with NEDD4. Binds to the WW domain of YAP1, WWP1 and WWP2. Interacts with WWOX. As to expression, expressed in most tissues but at significantly lower levels in placenta, lung, liver, and kidney.

The sequence is that of WW domain-binding protein 1 (WBP1) from Homo sapiens (Human).